The following is a 490-amino-acid chain: Cytochrome P450 71B29 (490 aa).

Residues 1-21 (MAIILCFLILLPLILIFLKKL) form a helical membrane-spanning segment. C440 serves as a coordination point for heme.

The protein belongs to the cytochrome P450 family. The cofactor is heme.

It is found in the membrane. In Arabidopsis thaliana (Mouse-ear cress), this protein is Cytochrome P450 71B29 (CYP71B29).